The chain runs to 1394 residues: Leucine-rich PPR motif-containing protein, mitochondrial (1394 aa).

The N-terminal 59 residues, 1 to 59, are a transit peptide targeting the mitochondrion; the sequence is MAALLRSARWLLRAGAAPRLPLSLRLLPGGPGRLHAASYLPAARAGPVAGGLLSPARLY. PPR repeat units lie at residues 126 to 160, 161 to 195, 196 to 230, 231 to 265, 266 to 300, 301 to 335, 403 to 437, and 438 to 472; these read LLRS…GAVY, DVSH…NIQP, NRVT…DLPV, TEAV…GIEP, GPDT…ELHL, MDRD…RRYI, HSFP…GFPI, and RPHY…GVHP. 3 positions are modified to N6-acetyllysine: Lys-155, Lys-187, and Lys-226. Lys-292 carries the post-translational modification N6-acetyllysine. Lys-463 and Lys-613 each carry N6-acetyllysine. 6 PPR repeats span residues 678 to 709, 710 to 746, 747 to 784, 785 to 820, 821 to 856, and 954 to 988; these read IRDV…ESDM, VTGG…SAVL, DTGK…IKDT, TALS…LAEP, STNI…KVLP, and RDQM…NVIP. Residues 712-1067 form an interaction with BECN1 and Aedes aegypti venom allergen-1 region; the sequence is GGYAALINLC…AKEQNIVFNA (356 aa). Lys-726 and Lys-750 each carry N6-acetyllysine. Phosphoserine is present on residues Ser-1026, Ser-1027, and Ser-1029. PPR repeat units lie at residues 1031–1065, 1066–1102, 1103–1137, 1138–1175, 1176–1210, and 1317–1351; these read TEPD…NIVF, NAET…GFTL, NDAA…QQTP, SRLA…IGLS, KMVF…ENKV, and KEEA…NTKL. The segment at 1121–1394 is RNA-binding; sequence KEAVTTLKTV…QLRKLRENSS (274 aa). Thr-1136 carries the post-translational modification Phosphothreonine. At Ser-1138 the chain carries Phosphoserine.

As to quaternary structure, component of mRNP complexes associated with HNRPA1. Component of the complex, at least composed of LRPPRC, BECN1 and BCL2; the interactions prevent BECN1 from forming an autophagy-inducing complex with PIK3C3. Interacts with CECR2, HEBP2, MAP1S and UXT. Interacts with PPARGC1A. Interacts with FOXO1. Interacts (via N-terminus) with EIF4E; the interaction promotes association of EIF4E with 4ESE-containing mRNAs. Interacts with exportin XPO1/CRM1; interacts both alone and in complex with EIF4E and 4ESE-containing mRNAs to form an EIF4E-dependent mRNA export complex. Interacts with importin IPO8; the interaction occurs when LRPPRC is in its RNA-free form and returns LRPPRC to the nucleus for further export rounds. Interacts with BECN1. Interacts with Aedes aegypti venom allergen-1; the interaction interrupts BECN1 and LRPPRC association. Expressed ubiquitously. Expression is highest in heart, skeletal muscle, kidney and liver, intermediate in brain, non-mucosal colon, spleen and placenta, and lowest in small intestine, thymus, lung and peripheral blood leukocytes.

It is found in the mitochondrion. The protein resides in the nucleus. Its subcellular location is the nucleoplasm. It localises to the nucleus inner membrane. The protein localises to the nucleus outer membrane. Functionally, may play a role in RNA metabolism in both nuclei and mitochondria. In the nucleus binds to HNRPA1-associated poly(A) mRNAs and is part of nmRNP complexes at late stages of mRNA maturation which are possibly associated with nuclear mRNA export. Positively modulates nuclear export of mRNAs containing the EIF4E sensitivity element (4ESE) by binding simultaneously to both EIF4E and the 4ESE and acting as a platform for assembly for the RNA export complex. Also binds to exportin XPO1/CRM1 to engage the nuclear pore and traffic the bound mRNAs to the cytoplasm. May bind mature mRNA in the nucleus outer membrane. In mitochondria binds to poly(A) mRNA. Plays a role in translation or stability of mitochondrially encoded cytochrome c oxidase (COX) subunits. May be involved in transcription regulation. Cooperates with PPARGC1A to regulate certain mitochondrially encoded genes and gluconeogenic genes and may regulate docking of PPARGC1A to transcription factors. Seems to be involved in the transcription regulation of the multidrug-related genes MDR1 and MVP. Part of a nuclear factor that binds to the invMED1 element of MDR1 and MVP gene promoters. Binds single-stranded DNA. Required for maintaining mitochondrial potential. Suppresses the initiation of basal levels of autophagy and mitophagy by sustaining BCL2 levels. The polypeptide is Leucine-rich PPR motif-containing protein, mitochondrial (LRPPRC) (Homo sapiens (Human)).